The primary structure comprises 352 residues: Ion-translocating oxidoreductase complex subunit D (352 aa).

The next 4 helical transmembrane spans lie at 20–40 (IMLL…WFFG), 42–62 (GTLF…AIVL), 69–91 (VASH…SIPP), and 123–143 (PAMI…TSWL). Residue threonine 187 is modified to FMN phosphoryl threonine. The next 5 helical transmembrane spans lie at 215–235 (LAGV…VFLL), 242–262 (WHIP…GWLF), 267–287 (LASP…FFIL), 301–321 (LIFG…GGYP), and 322–342 (DGVA…DYYT).

The protein belongs to the NqrB/RnfD family. In terms of assembly, the complex is composed of six subunits: RsxA, RsxB, RsxC, RsxD, RsxE and RsxG. The cofactor is FMN.

The protein localises to the cell inner membrane. Part of a membrane-bound complex that couples electron transfer with translocation of ions across the membrane. Required to maintain the reduced state of SoxR. In Salmonella paratyphi B (strain ATCC BAA-1250 / SPB7), this protein is Ion-translocating oxidoreductase complex subunit D.